The primary structure comprises 731 residues: 1,4-alpha-glucan branching enzyme GlgB (731 aa).

The active-site Nucleophile is D411. E464 functions as the Proton donor in the catalytic mechanism.

Belongs to the glycosyl hydrolase 13 family. GlgB subfamily. As to quaternary structure, monomer.

It catalyses the reaction Transfers a segment of a (1-&gt;4)-alpha-D-glucan chain to a primary hydroxy group in a similar glucan chain.. It participates in glycan biosynthesis; glycogen biosynthesis. Functionally, catalyzes the formation of the alpha-1,6-glucosidic linkages in glycogen by scission of a 1,4-alpha-linked oligosaccharide from growing alpha-1,4-glucan chains and the subsequent attachment of the oligosaccharide to the alpha-1,6 position. The chain is 1,4-alpha-glucan branching enzyme GlgB from Mycobacterium bovis (strain ATCC BAA-935 / AF2122/97).